Here is a 350-residue protein sequence, read N- to C-terminus: Serine-threonine kinase receptor-associated protein (350 aa).

7 WD repeats span residues 12-56 (GHTR…GTFL), 57-96 (GHKG…ELMT), 98-137 (AHKH…AEPK), 141-179 (GHTS…EVKS), 180-212 (LNFN…HSAV), 221-262 (EAPA…ESYK), and 263-302 (GHFG…TYGL). Phosphoserine occurs at positions 312, 335, and 338. Residues 327 to 350 (EEELEEIASENSDSIYSSTPEVKA) are disordered. Positions 337-350 (NSDSIYSSTPEVKA) are enriched in polar residues. Residue tyrosine 342 is modified to Phosphotyrosine.

It belongs to the WD repeat STRAP family. Part of the core SMN complex that contains SMN1, GEMIN2/SIP1, DDX20/GEMIN3, GEMIN4, GEMIN5, GEMIN6, GEMIN7, GEMIN8 and STRAP/UNRIP. Part of the SMN-Sm complex that contains SMN1, GEMIN2/SIP1, DDX20/GEMIN3, GEMIN4, GEMIN5, GEMIN6, GEMIN7, GEMIN8, STRAP/UNRIP and the Sm proteins SNRPB, SNRPD1, SNRPD2, SNRPD3, SNRPE, SNRPF and SNRPG. Interacts directly with GEMIN6 and GEMIN7. Associates with the SMN complex in the cytoplasm but not in the nucleus. Also interacts with CSDE1/UNR and MAWBP. Interacts with PDPK1. Interacts with TRIM48.

It is found in the cytoplasm. The protein localises to the nucleus. In terms of biological role, the SMN complex catalyzes the assembly of small nuclear ribonucleoproteins (snRNPs), the building blocks of the spliceosome, and thereby plays an important role in the splicing of cellular pre-mRNAs. Most spliceosomal snRNPs contain a common set of Sm proteins SNRPB, SNRPD1, SNRPD2, SNRPD3, SNRPE, SNRPF and SNRPG that assemble in a heptameric protein ring on the Sm site of the small nuclear RNA to form the core snRNP (Sm core). In the cytosol, the Sm proteins SNRPD1, SNRPD2, SNRPE, SNRPF and SNRPG are trapped in an inactive 6S pICln-Sm complex by the chaperone CLNS1A that controls the assembly of the core snRNP. To assemble core snRNPs, the SMN complex accepts the trapped 5Sm proteins from CLNS1A forming an intermediate. Binding of snRNA inside 5Sm triggers eviction of the SMN complex, thereby allowing binding of SNRPD3 and SNRPB to complete assembly of the core snRNP. STRAP plays a role in the cellular distribution of the SMN complex. Negatively regulates TGF-beta signaling but positively regulates the PDPK1 kinase activity by enhancing its autophosphorylation and by significantly reducing the association of PDPK1 with 14-3-3 protein. The chain is Serine-threonine kinase receptor-associated protein (STRAP) from Bos taurus (Bovine).